The sequence spans 139 residues: Low molecular weight protein-tyrosine-phosphatase PtpB (139 aa).

Residue cysteine 7 is the Nucleophile of the active site. Arginine 13 is a catalytic residue. The active-site Proton donor is the aspartate 111.

The protein belongs to the low molecular weight phosphotyrosine protein phosphatase family.

It carries out the reaction O-phospho-L-tyrosyl-[protein] + H2O = L-tyrosyl-[protein] + phosphate. Dephosphorylates the phosphotyrosine-containing proteins. The protein is Low molecular weight protein-tyrosine-phosphatase PtpB (ptpB) of Staphylococcus epidermidis (strain ATCC 35984 / DSM 28319 / BCRC 17069 / CCUG 31568 / BM 3577 / RP62A).